Consider the following 500-residue polypeptide: tRNA (guanine(37)-N(1))-methyltransferase (500 aa).

Residues histidine 215, 253–254 (DL), 281–282 (DA), and asparagine 312 contribute to the S-adenosyl-L-methionine site. Residues 463-500 (QIVAKKTPKPAPRPLPAKNKTTPDTNKMETDLTKLEMK) are disordered. Positions 488 to 500 (NKMETDLTKLEMK) are enriched in basic and acidic residues.

Belongs to the class I-like SAM-binding methyltransferase superfamily. TRM5/TYW2 family. As to quaternary structure, monomer.

The protein resides in the mitochondrion matrix. It localises to the nucleus. The protein localises to the cytoplasm. It carries out the reaction guanosine(37) in tRNA + S-adenosyl-L-methionine = N(1)-methylguanosine(37) in tRNA + S-adenosyl-L-homocysteine + H(+). Specifically methylates the N1 position of guanosine-37 in various cytoplasmic and mitochondrial tRNAs. Methylation is not dependent on the nature of the nucleoside 5' of the target nucleoside. This is the first step in the biosynthesis of wybutosine (yW), a modified base adjacent to the anticodon of tRNAs and required for accurate decoding. The protein is tRNA (guanine(37)-N(1))-methyltransferase of Anopheles darlingi (Mosquito).